The primary structure comprises 352 residues: Ion-translocating oxidoreductase complex subunit D (352 aa).

The next 4 helical transmembrane spans lie at 20–40 (IMLL…WFFG), 42–62 (GTLF…AIVL), 69–91 (VASH…SIPP), and 123–143 (PAMI…TSWL). Residue Thr187 is modified to FMN phosphoryl threonine. The next 5 helical transmembrane spans lie at 215 to 235 (LAGV…VFLL), 242 to 262 (WHIP…GWLF), 267 to 287 (LASP…FFIL), 301 to 321 (LIFG…GGYP), and 322 to 342 (DGVA…DYYT).

This sequence belongs to the NqrB/RnfD family. As to quaternary structure, the complex is composed of six subunits: RsxA, RsxB, RsxC, RsxD, RsxE and RsxG. The cofactor is FMN.

Its subcellular location is the cell inner membrane. Functionally, part of a membrane-bound complex that couples electron transfer with translocation of ions across the membrane. Required to maintain the reduced state of SoxR. The protein is Ion-translocating oxidoreductase complex subunit D of Salmonella enteritidis PT4 (strain P125109).